A 119-amino-acid polypeptide reads, in one-letter code: Large ribosomal subunit protein uL14 (119 aa).

It belongs to the universal ribosomal protein uL14 family. Part of the 50S ribosomal subunit. Forms a cluster with proteins L3 and L19. In the 70S ribosome, L14 and L19 interact and together make contacts with the 16S rRNA in bridges B5 and B8.

Its function is as follows. Binds to 23S rRNA. Forms part of two intersubunit bridges in the 70S ribosome. This Wolbachia sp. subsp. Brugia malayi (strain TRS) protein is Large ribosomal subunit protein uL14.